Reading from the N-terminus, the 150-residue chain is UPF0336 protein SCO4636 (150 aa).

In terms of domain architecture, MaoC-like spans 8-116 (VGRSYPPTAP…STIEAIKSMA (109 aa)).

This sequence belongs to the UPF0336 family.

The chain is UPF0336 protein SCO4636 from Streptomyces coelicolor (strain ATCC BAA-471 / A3(2) / M145).